Consider the following 901-residue polypeptide: Probable dipeptidyl-aminopeptidase B (901 aa).

The span at 1–22 shows a compositional bias: low complexity; sequence MSSPRPSTSSTSSDSGLSVDTT. The interval 1–67 is disordered; sequence MSSPRPSTSS…EPFLPSAKKQ (67 aa). Residues 1–76 lie on the Cytoplasmic side of the membrane; it reads MSSPRPSTSS…QAASGSRTSR (76 aa). Residues 77-97 traverse the membrane as a helical; Signal-anchor for type II membrane protein segment; sequence LIWGLVILCVAGWLWGLVLFV. Over 98–901 the chain is Vacuolar; that stretch reads TQNRSAQQSV…VKRSLPMLVK (804 aa). 2 N-linked (GlcNAc...) asparagine glycosylation sites follow: asparagine 334 and asparagine 625. The active-site Charge relay system is the serine 739. Asparagine 793 carries N-linked (GlcNAc...) asparagine glycosylation. Residues aspartate 816 and histidine 849 each act as charge relay system in the active site.

It belongs to the peptidase S9B family.

It localises to the vacuole membrane. It catalyses the reaction Release of an N-terminal dipeptide, Xaa-Yaa-|-Zaa-, from a polypeptide, preferentially when Yaa is Pro, provided Zaa is neither Pro nor hydroxyproline.. In terms of biological role, type IV dipeptidyl-peptidase which removes N-terminal dipeptides sequentially from polypeptides having unsubstituted N-termini provided that the penultimate residue is proline. The polypeptide is Probable dipeptidyl-aminopeptidase B (dapB) (Aspergillus niger (strain ATCC MYA-4892 / CBS 513.88 / FGSC A1513)).